The primary structure comprises 61 residues: MAVPKSKKSKSRTRMRRSHDRLAMNTYIEDATSGELRRPHHIDLKTGMYRGKQILEPTDDI.

It belongs to the bacterial ribosomal protein bL32 family.

The chain is Large ribosomal subunit protein bL32 from Hyphomonas neptunium (strain ATCC 15444).